A 333-amino-acid chain; its full sequence is MISLESQVLERHLSIFADKTLLFAGGVNDDFPVQIQKIAKTVTVWSWYFDYANAQGRKSAVDFSPVCDTQVDVIVYYWTKNKAEVQFQLMQLLANGRDNQEILIVGENRCGVRSAEKMLSAFGDIGKIDSARRCGLYHFRLKKRPHFDINAYWKTYRNPKLDALTVYSLPGVFSADELDGGTELLLSTINTHIRGDVLDLGCGAGVLGAYVKQQNPQARVMLTDIHAMALASAERTLAENRLAGKVLASDVFSHIQGKFDLIISNPPFHDGIGTAYRAVSELIKEARWRLKEDGELRIVANAFLPYPDLLDEHFGSHQVLAKTNKFKVYSVCA.

Belongs to the methyltransferase superfamily. RsmC family. As to quaternary structure, monomer.

It localises to the cytoplasm. The catalysed reaction is guanosine(1207) in 16S rRNA + S-adenosyl-L-methionine = N(2)-methylguanosine(1207) in 16S rRNA + S-adenosyl-L-homocysteine + H(+). Specifically methylates the guanine in position 1207 of 16S rRNA in the 30S particle. In Actinobacillus succinogenes (strain ATCC 55618 / DSM 22257 / CCUG 43843 / 130Z), this protein is Ribosomal RNA small subunit methyltransferase C.